The following is a 119-amino-acid chain: Holo-[acyl-carrier-protein] synthase (119 aa).

Positions 7 and 56 each coordinate Mg(2+).

This sequence belongs to the P-Pant transferase superfamily. AcpS family. Mg(2+) serves as cofactor.

It is found in the cytoplasm. The catalysed reaction is apo-[ACP] + CoA = holo-[ACP] + adenosine 3',5'-bisphosphate + H(+). In terms of biological role, transfers the 4'-phosphopantetheine moiety from coenzyme A to a Ser of acyl-carrier-protein. This is Holo-[acyl-carrier-protein] synthase from Chlamydia trachomatis serovar D (strain ATCC VR-885 / DSM 19411 / UW-3/Cx).